Reading from the N-terminus, the 657-residue chain is Kinesin-like protein KIF22 (657 aa).

The tract at residues 1 to 33 is disordered; that stretch reads MNVRAKKKPQQREMASASSGPSRSLSKGGVSRR. Over residues 16–33 the composition is skewed to low complexity; that stretch reads SASSGPSRSLSKGGVSRR. The Kinesin motor domain occupies 38–360; that stretch reads RVRVAVRLRP…LNFTARSKEV (323 aa). 119–126 contributes to the ATP binding site; it reads GPTGAGKT. A disordered region spans residues 388–415; the sequence is PSEAKKAKGPEEESTGSPESTAAPASAS. Positions 402 to 415 are enriched in low complexity; the sequence is TGSPESTAAPASAS. A phosphoserine mark is found at S404, S419, and S444. Residue K457 forms a Glycyl lysine isopeptide (Lys-Gly) (interchain with G-Cter in SUMO2) linkage. Residues 457-502 are a coiled coil; that stretch reads KRERMVLIKTVEEKNLEIERLKMKQKELEAKVLAQEALDPKEKENT. Phosphoserine is present on residues S537, S554, and S573.

This sequence belongs to the TRAFAC class myosin-kinesin ATPase superfamily. Kinesin family. As to quaternary structure, interacts with FAM83D and SIAH1. Ubiquitinated; mediated by SIAH1 and leading to its subsequent proteasomal degradation.

It is found in the nucleus. It localises to the cytoplasm. The protein resides in the cytoskeleton. Kinesin family member that is involved in spindle formation and the movements of chromosomes during mitosis and meiosis. Binds to microtubules and to DNA. Plays a role in congression of laterally attached chromosomes in NDC80-depleted cells. The chain is Kinesin-like protein KIF22 (Kif22) from Rattus norvegicus (Rat).